The chain runs to 336 residues: Cytoskeleton protein RodZ (336 aa).

The Cytoplasmic segment spans residues 1-111 (MNTEATHDKT…LGKRRKKRDG (111 aa)). Residues 19–71 (LRNAREQLGLSQQAVAERLCLKVSTVRDIEEDKAPADLASTFLRGYIRSYAKL) enclose the HTH cro/C1-type domain. The H-T-H motif DNA-binding region spans 30-49 (QQAVAERLCLKVSTVRDIEE). Residues 112 to 132 (WLMSFTWLVLFVVIGLTGAWW) traverse the membrane as a helical; Signal-anchor for type II membrane protein segment. Over 133-336 (WQNHKAQQEE…TVSAEQSAAQ (204 aa)) the chain is Periplasmic. Residues 152 to 164 (AALNNSGNNGAQS) show a composition bias toward low complexity. Residues 152–235 (AALNNSGNNG…TTTGNVNVTQ (84 aa)) are disordered. Composition is skewed to polar residues over residues 165-190 (VPLN…TVEP) and 200-217 (PDQT…QANV). The segment covering 220-235 (APAVTPTTTGNVNVTQ) has biased composition (low complexity).

This sequence belongs to the RodZ family.

The protein localises to the cell inner membrane. Functionally, cytoskeletal protein that is involved in cell-shape control through regulation of the length of the long axis. The protein is Cytoskeleton protein RodZ of Enterobacter sp. (strain 638).